The chain runs to 199 residues: Hematopoietic prostaglandin D synthase (199 aa).

One can recognise a GST N-terminal domain in the interval 2 to 79 (PNYKLLYFNM…YLTKNTDLAG (78 aa)). Glutathione-binding positions include Tyr8, Arg14, Trp39, 49–51 (GKI), and 63–64 (QS). The region spanning 81–199 (TELEQCQVDA…WILKRPQTKL (119 aa)) is the GST C-terminal domain.

The protein belongs to the GST superfamily. Sigma family. As to quaternary structure, homodimer. The cofactor is glutathione. Highly expressed in spleen and bone marrow. Lower levels of expression in small intestine, colon, liver, pancreas and skin. Not detected in brain, heart, lung or kidney (at protein level).

The protein localises to the cytoplasm. The catalysed reaction is prostaglandin H2 = prostaglandin D2. It catalyses the reaction RX + glutathione = an S-substituted glutathione + a halide anion + H(+). The enzyme catalyses 2-glyceryl-prostaglandin H2 = 2-glyceryl-prostaglandin D2. Its function is as follows. Bifunctional enzyme which catalyzes both the conversion of PGH2 to PGD2, a prostaglandin involved in smooth muscle contraction/relaxation and a potent inhibitor of platelet aggregation, and the conjugation of glutathione with a wide range of aryl halides and organic isothiocyanates. Also exhibits low glutathione-peroxidase activity towards cumene hydroperoxide. This is Hematopoietic prostaglandin D synthase from Rattus norvegicus (Rat).